The primary structure comprises 170 residues: ATP synthase subunit b (170 aa).

A helical transmembrane segment spans residues 5-25; it reads YFIPCLLLPTMMLASGGGGET.

The protein belongs to the ATPase B chain family. In terms of assembly, F-type ATPases have 2 components, F(1) - the catalytic core - and F(0) - the membrane proton channel. F(1) has five subunits: alpha(3), beta(3), gamma(1), delta(1), epsilon(1). F(0) has three main subunits: a(1), b(2) and c(10-14). The alpha and beta chains form an alternating ring which encloses part of the gamma chain. F(1) is attached to F(0) by a central stalk formed by the gamma and epsilon chains, while a peripheral stalk is formed by the delta and b chains.

The protein resides in the cell inner membrane. Functionally, f(1)F(0) ATP synthase produces ATP from ADP in the presence of a proton or sodium gradient. F-type ATPases consist of two structural domains, F(1) containing the extramembraneous catalytic core and F(0) containing the membrane proton channel, linked together by a central stalk and a peripheral stalk. During catalysis, ATP synthesis in the catalytic domain of F(1) is coupled via a rotary mechanism of the central stalk subunits to proton translocation. Component of the F(0) channel, it forms part of the peripheral stalk, linking F(1) to F(0). In Wolinella succinogenes (strain ATCC 29543 / DSM 1740 / CCUG 13145 / JCM 31913 / LMG 7466 / NCTC 11488 / FDC 602W) (Vibrio succinogenes), this protein is ATP synthase subunit b.